A 757-amino-acid polypeptide reads, in one-letter code: Endoribonuclease ysh1 (757 aa).

Residues histidine 78, histidine 80, aspartate 82, histidine 83, histidine 165, and aspartate 186 each contribute to the Zn(2+) site. The active-site Proton donor is histidine 403. Residue histidine 425 participates in Zn(2+) binding. The disordered stretch occupies residues 698-757 (SQNDVSEDDFENEESDDDKIFEQQTKIEDDVKNENKTEPVEEQKSEEKNEQPNLKKEELS). Residues 702-714 (VSEDDFENEESDD) are compositionally biased toward acidic residues. Residues 715 to 757 (DKIFEQQTKIEDDVKNENKTEPVEEQKSEEKNEQPNLKKEELS) show a composition bias toward basic and acidic residues.

It belongs to the metallo-beta-lactamase superfamily. RNA-metabolizing metallo-beta-lactamase-like family. CPSF2/YSH1 subfamily.

It localises to the cytoplasm. It is found in the nucleus. In terms of biological role, component of the cleavage factor I (CF I) involved in pre-mRNA 3'-end processing. The polypeptide is Endoribonuclease ysh1 (ysh1) (Schizosaccharomyces pombe (strain 972 / ATCC 24843) (Fission yeast)).